An 844-amino-acid chain; its full sequence is MCDVDLKTCQKSSKFKKKDIVELGKQCGVNPYLSNGKEKSRTVICTEIVASYNPPPGSSQGDDSEHESISQVNNIPNRNEKFLPKSKYPTYTQVLNMEKRQLKALAKKLGLEYKKQTEQQLQGAINLKIKTLEGLNSSTRSRSPSVRSRCRSPSPRAPSVRSRLPSTRSRCRSPSPRAPSTRSRSPSVRSRCRSPSPRAPSVRSRSPSRQSVRQSSESADEAEQVALETMKTAHLRMLATTLGASTVTGMKKKDLIDYIKSRRKSPSPSPVPPSTRCDPTTTAPPMEDLFKKKVDELKTMAKNAGFVRWNGKTLSKMNKSDLVDFLLNGMNRPSPSLPQSRSRTRSPPPPPRSRSPSVGSPSVRDGGAGRRRLPELTRAQLTAMKVVDLKAMATELGLTRYRGMNRTQMRKGDVINFIIETQKKQKTPSPSPTPPSPVPSVVGSRRPKSPLPYKSRDFVALADDDSEPGVEVQKKMGKSGEREPKSVPNVRIIPSEIPAPTEGSLRSRLSTQQQTQQSVVYEDPNESIKPEESVRAPKLSVVDPQLSRKTLKPLPSLVVTDQPSKQPELPKYKGRTPYTDLEQLAQSKGYTVKQVSGDGNCLFRSVCKSIRALRGEKFTHRQLRQMVVDYLRENPEFLQVYLEYVARQRDNSLPSTEQYLSEMSKCGTWGDLICLKTLSEILKVQFNLLILNTKQFQMVSSQDDYPDVIPLGYIDNYHYTSLVPIGLDSKGGAASSTTTGLKQLDGPRPPITLIPESQVPAVAATISTQQPPSIVAPPISVGGSQLVPSIVPQPQMPKPDFKPVKPLSNLNELLDLMDRVKPQVYNDISQLEKARQSIKVSLGL.

Disordered stretches follow at residues 136–223, 261–287, 326–377, and 422–541; these read NSST…DEAE, SRRK…PPME, LLNG…PELT, and QKKQ…KLSV. Residues 137-216 are compositionally biased toward low complexity; the sequence is SSTRSRSPSV…PSRQSVRQSS (80 aa). Composition is skewed to low complexity over residues 332–341 and 354–364; these read RPSPSLPQSR and RSPSVGSPSVR. Positions 429 to 438 are enriched in pro residues; it reads SPSPTPPSPV. Positions 472–485 are enriched in basic and acidic residues; that stretch reads VQKKMGKSGEREPK. Over residues 504 to 518 the composition is skewed to low complexity; it reads SLRSRLSTQQQTQQS. The span at 526–535 shows a compositional bias: basic and acidic residues; sequence ESIKPEESVR. An OTU domain is found at 590–725; sequence YTVKQVSGDG…NYHYTSLVPI (136 aa). D598 is a catalytic residue. C601 serves as the catalytic Nucleophile. H718 is an active-site residue.

The enzyme catalyses Thiol-dependent hydrolysis of ester, thioester, amide, peptide and isopeptide bonds formed by the C-terminal Gly of ubiquitin (a 76-residue protein attached to proteins as an intracellular targeting signal).. Its function is as follows. Hydrolase that can remove conjugated ubiquitin from proteins and may therefore play an important regulatory role at the level of protein turnover by preventing degradation. This chain is Putative ubiquitin thioesterase 232R, found in Aedes vexans (Inland floodwater mosquito).